Reading from the N-terminus, the 269-residue chain is Transcription factor MYB7 (269 aa).

HTH myb-type domains follow at residues 9 to 61 (KEHM…INYL) and 62 to 116 (RPDL…KRKL). 2 consecutive DNA-binding regions (H-T-H motif) follow at residues 37-61 (WRSLPRAAGLLRCGKSCRLRWINYL) and 89-112 (WSLIAARLPGRTDNEIKNYWNTHI).

In terms of assembly, interacts with SAD2. As to expression, expressed in anthers. Expressed in pollen grains and mature seeds. Expressed in roots and vasculature of leaves.

The protein resides in the nucleus. Transcription factor involved in the negative regulation of flavonol biosynthesis. Represses the early phenylpropanoid genes, phenylalanine ammonia-lyase (PAL), cinnamate 4-hydroxylase (C4H) and 4-coumarate-CoA ligase (4CL), as well as the flavonoid-specific genes, flavonoid 3'-hydroxylase (F3'H) and dihydroflavonol 4-reductase (DFR). Plays a role in seed germination inhibition. Negatively regulates the expression of the abscisic acid (ABA) signaling transcription factor ABI5 in seeds. The sequence is that of Transcription factor MYB7 from Arabidopsis thaliana (Mouse-ear cress).